We begin with the raw amino-acid sequence, 167 residues long: Phosphopantetheine adenylyltransferase (167 aa).

Serine 10 contributes to the substrate binding site. ATP is bound by residues serine 10 to phenylalanine 11 and histidine 18. Substrate-binding residues include lysine 42, alanine 79, and arginine 93. Residues glycine 94–arginine 96, glutamate 104, and valine 129–threonine 135 each bind ATP.

This sequence belongs to the bacterial CoaD family. In terms of assembly, homohexamer. It depends on Mg(2+) as a cofactor.

Its subcellular location is the cytoplasm. The enzyme catalyses (R)-4'-phosphopantetheine + ATP + H(+) = 3'-dephospho-CoA + diphosphate. It functions in the pathway cofactor biosynthesis; coenzyme A biosynthesis; CoA from (R)-pantothenate: step 4/5. Functionally, reversibly transfers an adenylyl group from ATP to 4'-phosphopantetheine, yielding dephospho-CoA (dPCoA) and pyrophosphate. This chain is Phosphopantetheine adenylyltransferase, found in Beijerinckia indica subsp. indica (strain ATCC 9039 / DSM 1715 / NCIMB 8712).